The sequence spans 87 residues: MVNMKASMFLTFAGLVLLFVVCYASESEEKEFPKEMLSSIFAVDDDFKQEERDCAGYMRECKEKLCCSGYVCSSRWKWCVLPAPWRR.

The signal sequence occupies residues 1–24; the sequence is MVNMKASMFLTFAGLVLLFVVCYA. Residues 25–52 constitute a propeptide that is removed on maturation; that stretch reads SESEEKEFPKEMLSSIFAVDDDFKQEER. Disulfide bonds link C54/C67, C61/C72, and C66/C79.

The protein belongs to the neurotoxin 10 (Hwtx-1) family. 51 (Hntx-8) subfamily. Hntx-8 sub-subfamily. Expressed by the venom gland.

The protein localises to the secreted. Functionally, ion channel inhibitor. The protein is U3-theraphotoxin-Hhn1a 2 of Cyriopagopus hainanus (Chinese bird spider).